An 865-amino-acid polypeptide reads, in one-letter code: Alanine--tRNA ligase (865 aa).

Zn(2+) contacts are provided by His552, His556, Cys654, and His658.

This sequence belongs to the class-II aminoacyl-tRNA synthetase family. Zn(2+) is required as a cofactor.

The protein localises to the cytoplasm. The catalysed reaction is tRNA(Ala) + L-alanine + ATP = L-alanyl-tRNA(Ala) + AMP + diphosphate. Functionally, catalyzes the attachment of alanine to tRNA(Ala) in a two-step reaction: alanine is first activated by ATP to form Ala-AMP and then transferred to the acceptor end of tRNA(Ala). Also edits incorrectly charged Ser-tRNA(Ala) and Gly-tRNA(Ala) via its editing domain. The polypeptide is Alanine--tRNA ligase (Coxiella burnetii (strain RSA 331 / Henzerling II)).